A 262-amino-acid polypeptide reads, in one-letter code: Nurim (262 aa).

Residues 1-4 lie on the Nuclear side of the membrane; the sequence is MAPA. Residues 5 to 28 traverse the membrane as a helical segment; that stretch reads LLLVPAALASFILAFGTGVEFVRF. Residues 29–58 lie on the Perinuclear space side of the membrane; that stretch reads TSLRPLLGGIPESGGPDARHGWLAALQDRS. Residues 59 to 80 traverse the membrane as a helical segment; it reads ILASLAWDLCLLLLFVVQHSLM. The Nuclear segment spans residues 81–97; sequence ATEAVKAWTSRYFGVLQ. A helical transmembrane segment spans residues 98–114; the sequence is RSLYVACTALALQLVMR. Residues 115 to 133 are Perinuclear space-facing; sequence YWETTPRGPVLWEARAEPW. A helical transmembrane segment spans residues 134–164; the sequence is ATWVPLLCFVLHVVSWLLIFSILLVFDYAEL. Residues 165–191 lie on the Nuclear side of the membrane; the sequence is MGLKQVYYHVLGLGEPLSLKSPRALRL. The chain crosses the membrane as a helical span at residues 192–210; it reads FSHLRHPVCVELLTVLWVV. Residues 211-216 are Perinuclear space-facing; the sequence is PTLGTD. A helical transmembrane segment spans residues 217 to 234; the sequence is RLLLALLFTLYLGLAHGL. Residues 235 to 262 lie on the Nuclear side of the membrane; it reads DQQDLRYLRSQLQRKLHLLSRPQDGEAE.

Belongs to the nurim family.

The protein resides in the nucleus inner membrane. The sequence is that of Nurim (Nrm) from Mus musculus (Mouse).